We begin with the raw amino-acid sequence, 301 residues long: MKIDLTNLITESRNTASQHIDTLSTIDMLKVINDEDKKVALAVEKTLPEISQVVDAITEAFKKGGRLIYTGAGTSGRLGILDASECPPTYGSKPEQVVGLIAGGHTAILRAVENAEDNRELGEGDLKGLNFNEKDVLVGIAASGRTPYVLGAMAYAKSVNATVACISCNPNSPMTAAADISITPVVGAEVVTGSSRMKAGTAQKLVLNMLTTGAMIRSGKVFGNLMVDVEATNAKLVERQKKIVIEATDCSREEAESALAACNGHCKTAIVMVLAQLSAEEAKQLLDNNKGFIRAAIAAGK.

The SIS domain maps to 57–220 (ITEAFKKGGR…TTGAMIRSGK (164 aa)). Catalysis depends on Glu85, which acts as the Proton donor. Glu116 is an active-site residue.

This sequence belongs to the GCKR-like family. MurNAc-6-P etherase subfamily. In terms of assembly, homodimer.

The enzyme catalyses N-acetyl-D-muramate 6-phosphate + H2O = N-acetyl-D-glucosamine 6-phosphate + (R)-lactate. The protein operates within amino-sugar metabolism; 1,6-anhydro-N-acetylmuramate degradation. It functions in the pathway amino-sugar metabolism; N-acetylmuramate degradation. It participates in cell wall biogenesis; peptidoglycan recycling. Its function is as follows. Specifically catalyzes the cleavage of the D-lactyl ether substituent of MurNAc 6-phosphate, producing GlcNAc 6-phosphate and D-lactate. Together with AnmK, is also required for the utilization of anhydro-N-acetylmuramic acid (anhMurNAc) either imported from the medium or derived from its own cell wall murein, and thus plays a role in cell wall recycling. The protein is N-acetylmuramic acid 6-phosphate etherase of Photobacterium profundum (strain SS9).